The following is a 335-amino-acid chain: Urokinase plasminogen activator surface receptor (335 aa).

Residues 1-22 (MGHPPLLPLLLLLHTCVPASWG) form the signal peptide. 3 UPAR/Ly6 domains span residues 23–114 (LRCM…RSRY), 115–213 (LECI…PQNG), and 214–305 (RQCY…YRSG). 3 cysteine pairs are disulfide-bonded: C25–C46, C28–C34, and C39–C67. Residue N74 is glycosylated (N-linked (GlcNAc...) asparagine). 11 cysteine pairs are disulfide-bonded: C93–C98, C117–C144, C120–C127, C137–C169, C175–C192, C193–C198, C216–C244, C219–C227, C237–C263, C269–C287, and C288–C293. N-linked (GlcNAc...) asparagine glycosylation is found at N184, N194, N222, and N255. A lipid anchor (GPI-anchor amidated glycine) is attached at G305. The propeptide at 306-335 (AAPQPGPAHLSLTITLLMTARLWGGTLLWT) is removed in mature form.

In terms of assembly, monomer. Interacts with MRC2. Interacts (via the UPAR/Ly6 domains) with SRPX2. Interacts with FAP (seprase); the interaction occurs at the cell surface of invadopodia membrane. Interacts with SORL1 (via N-terminal ectodomain); this interaction decreases PLAUR internalization. The ternary complex composed of PLAUR-PLAU-SERPINE1 also interacts with SORL1. Interacts with CD82; this interaction prevents PLAUR from binding to its high affinity ligand PLAU. In terms of tissue distribution, expressed in neurons of the rolandic area of the brain (at protein level). Expressed in the brain.

Its subcellular location is the cell membrane. The protein resides in the cell projection. The protein localises to the invadopodium membrane. It is found in the secreted. Functionally, acts as a receptor for urokinase plasminogen activator. Plays a role in localizing and promoting plasmin formation. Mediates the proteolysis-independent signal transduction activation effects of U-PA. It is subject to negative-feedback regulation by U-PA which cleaves it into an inactive form. This chain is Urokinase plasminogen activator surface receptor (PLAUR), found in Homo sapiens (Human).